Reading from the N-terminus, the 183-residue chain is Hypoxanthine/guanine phosphoribosyltransferase (183 aa).

It belongs to the purine/pyrimidine phosphoribosyltransferase family. Archaeal HPRT subfamily. As to quaternary structure, homodimer.

The protein resides in the cytoplasm. The catalysed reaction is IMP + diphosphate = hypoxanthine + 5-phospho-alpha-D-ribose 1-diphosphate. The enzyme catalyses GMP + diphosphate = guanine + 5-phospho-alpha-D-ribose 1-diphosphate. It participates in purine metabolism; IMP biosynthesis via salvage pathway; IMP from hypoxanthine: step 1/1. In terms of biological role, catalyzes a salvage reaction resulting in the formation of IMP that is energically less costly than de novo synthesis. This Methanocaldococcus vulcanius (strain ATCC 700851 / DSM 12094 / M7) (Methanococcus vulcanius) protein is Hypoxanthine/guanine phosphoribosyltransferase.